Consider the following 537-residue polypeptide: MLMYRRDFLKSVTAAWVAFGLPNPLGGAFATNRVIALRRLGQSQRFDYELLKERARALAAAPYHSRKRVLPTPLERLSWDQYQSIRYRQDHALWADSDAHFQVKFFHLGLYFHSPVRMYEVVDGMAQELAYDPAAFDYGSSGLNGKGLPKDLGFAGFRLNTRKDTDRDFAAFLGASYFRAVGQEGQYGQSARGLAVNTGSSGPEEFPDFIAYYLEQPTSDADTVVMYGLLDSPSIAGAYRFSITHADVLRMDIDSALYPRETIERLGIAPCTSMYQVGENDRRMGWDWRPEIHDTDGLFLWTGNGEWIWRPLCNPLHLRFNMFLDNNPRGFGLLQRDRDFDHYQDDGVFYEKRPCLWVEPKHGWGEGSVQLVEIPTFDETFDNIVAFWNPRNKPHPGQELLFGYRLYWGALPPVSSSLAYCVATRTGLGGVVGQKRKYFSWRFAVDFVGGKLAALARVHDVSVEPVLHMTRGRPEIVSARPLHEIRGYRVMFDVVPLEDSAQQIDIRLYLRDTNGEPLTETWLYQWMPPILEERKIY.

Residues 1–30 (MLMYRRDFLKSVTAAWVAFGLPNPLGGAFA) constitute a signal peptide (tat-type signal).

The protein belongs to the OpgD/OpgG family. In terms of processing, predicted to be exported by the Tat system. The position of the signal peptide cleavage has not been experimentally proven.

The protein localises to the periplasm. It participates in glycan metabolism; osmoregulated periplasmic glucan (OPG) biosynthesis. Its function is as follows. Probably involved in the control of the structural glucose backbone of osmoregulated periplasmic glucans (OPGs). The protein is Glucans biosynthesis protein D of Xylella fastidiosa (strain M12).